We begin with the raw amino-acid sequence, 974 residues long: Short transient receptor potential channel 4 (974 aa).

The Cytoplasmic segment spans residues 1–324 (MAQFYYKRNV…YDEFPGWRRR (324 aa)). 4 ANK repeats span residues 29–60 (LSPSEKAYLNAVEKGDYASVKKSLEEAEIYFK), 71–93 (RTALLIAIENENLELIELLLSFN), 96–118 (VGDALLHAIRKEVVGAVELLLNH), and 141–165 (PDITPIILAAHTNNYEIIKLLVQKG). The tract at residues 87–172 (ELLLSFNVYV…QKGVSVPRPH (86 aa)) is multimerization domain. Zn(2+)-binding residues include H172, C176, C178, and C181. Residues 223–260 (LSWELQELSKVENEFKSEYEELSRQCKQFAKDLLDQTR) adopt a coiled-coil conformation. The segment at 254–304 (DLLDQTRSSRELEIILNYRDDNSLIEEQSGNDLARLKLAIKYRQKEFVAQP) is multimerization domain. Residues 325 to 359 (HWAVKMVTCFIIGLLFPVFSVCYLIAPKSPLGLFI) constitute an intramembrane region (discontinuously helical). Topologically, residues 360 to 362 (RKP) are cytoplasmic. The helical transmembrane segment at 363 to 383 (FIKFICHTASYLTFLFLLLLA) threads the bilayer. Topologically, residues 384-403 (SQHIDRSDLNRQGPPPTIVE) are extracellular. A helical membrane pass occupies residues 404–418 (WMILPWVLGFIWGEI). Ca(2+) is bound by residues E417, Q420, N435, and D438. The Cytoplasmic portion of the chain corresponds to 419-432 (KQMWDGGLQDYIHD). The chain crosses the membrane as a helical span at residues 433–453 (WWNLMDFVMNSLYLATISLKI). Over 454–475 (VAFVKYSALNPRESWDMWHPTL) the chain is Extracellular. Residues 476–498 (VAEALFAIANIFSSLRLISLFTA) form a helical membrane-spanning segment. Residues 499-511 (NSHLGPLQISLGR) lie on the Cytoplasmic side of the membrane. A helical transmembrane segment spans residues 512–534 (MLLDILKFLFIYCLVLLAFANGL). Residues 535 to 599 (NQLYFYYEET…HEFTEFVGAT (65 aa)) lie on the Extracellular side of the membrane. Cysteines 549 and 554 form a disulfide. A helical transmembrane segment spans residues 600–620 (MFGTYNVISLVVLLNMLIAMM). The tract at residues 615 to 974 (MLIAMMNNSY…AHEDYVTTRL (360 aa)) is interaction with ITPR1, ITPR2 and ITPR3. At 621–974 (NNSYQLIADH…AHEDYVTTRL (354 aa)) the chain is on the cytoplasmic side. The segment at 765–787 (ANAASSADSDEKSQSEGNGKDKR) is disordered. Residues 773–784 (SDEKSQSEGNGK) show a composition bias toward basic and acidic residues. 2 positions are modified to phosphotyrosine; by FYN: Y956 and Y969. A PDZ-binding domain region spans residues 972-974 (TRL).

Belongs to the transient receptor (TC 1.A.4) family. STrpC subfamily. TRPC4 sub-subfamily. As to quaternary structure, homotetramer. Heterotetramer with TRPC1 and/or TRPC5. Forms a heteromeric ion channel with TRPC1, with a 1:3 TRPC1:TRPC4 stoichiometry. Interacts with TRPC4AP. Isoform alpha but not isoform beta interacts with ITPR1, ITPR2 and ITPR3. Interacts with NHERF1. Interacts with MX1 and RNF24. Interacts (via CIRB domain) with SESTD1 (via the spectrin 1 repeat) and SPTBN5 (via C-terminus). Interacts with CDH5 and CTNNB1. Interacts (via protein 4.1-binding domain) with EPB41L2. Interacts with PLSCR1. Abundantly expressed in brain (hippocampal CA1 pyramidal neurons, dentate gyrus granule cells, and cerebral cortical neurons, and in the septal nuclei and the mitral layer of olfactory bulb). Lower levels are detected in other tissues.

The protein resides in the cell membrane. It carries out the reaction Ca(2+)(in) = Ca(2+)(out). The catalysed reaction is Na(+)(in) = Na(+)(out). It catalyses the reaction Li(+)(in) = Li(+)(out). The enzyme catalyses Cs(+)(in) = Cs(+)(out). With respect to regulation, may be operated by a phosphatidylinositol second messenger system activated by receptor tyrosine kinases or G-protein coupled receptors. May be activated by intracellular calcium store depletion. Functionally, forms a receptor-activated non-selective calcium permeant cation channel. Acts as a cell-cell contact-dependent endothelial calcium entry channel. Forms a homomeric ion channel or a heteromeric ion channel with TRPC1; the heteromeric ion channel has reduced calcium permeability compared to the homomeric channel. Also permeable to monovalent ions including sodium, lithium and cesium ions. In Mus musculus (Mouse), this protein is Short transient receptor potential channel 4 (Trpc4).